A 380-amino-acid chain; its full sequence is MTFASDSVGLVEARRADFDTPLALASGTVLDRYSLCYETYGELNPEANNAILICHALSGHHHVAGRYCEDDKQAGWWDNMVGPGKPIDTARFFVVGVNNLGGCHGSTGPSSVNPATGRPWGSAFPLVTVPDWVESQARLADLLGIRRWAAVIGGSLGGMQALEWSMRFPERVANALVIASAPKLSAQNIAFNDVARQAILTDPEFHGGDFYAHGVVPRRGLRLARMLGHITYLSDDGMGAKFGRLLRSGDYQYGFDVEFEIESYLRYQGDKFSGLFDANTYLLMTKALDYFDPAKAFDGDLVAALARVRANFLIAAFTSDWRFAPDRSREIVKALVAAGKRVSYGEIESTHGHDAFLMTDSPYVALMRAYLNRVAEELAA.

Residues 49–357 form the AB hydrolase-1 domain; it reads NAILICHALS…ESTHGHDAFL (309 aa). Residue S155 is the Nucleophile of the active site. R225 is a substrate binding site. Catalysis depends on residues D320 and H353. D354 is a binding site for substrate.

This sequence belongs to the AB hydrolase superfamily. MetX family. Homodimer.

The protein resides in the cytoplasm. The catalysed reaction is L-homoserine + succinyl-CoA = O-succinyl-L-homoserine + CoA. It functions in the pathway amino-acid biosynthesis; L-methionine biosynthesis via de novo pathway; O-succinyl-L-homoserine from L-homoserine: step 1/1. Transfers a succinyl group from succinyl-CoA to L-homoserine, forming succinyl-L-homoserine. This Laribacter hongkongensis (strain HLHK9) protein is Homoserine O-succinyltransferase.